Consider the following 837-residue polypeptide: Outer membrane usher protein HifC (837 aa).

Positions 1–26 (MKTKNFPLNKIAFACTLLLANPVAWA) are cleaved as a signal peptide. Cysteines 813 and 833 form a disulfide.

Belongs to the fimbrial export usher family.

It localises to the cell outer membrane. Essential for piliation. The polypeptide is Outer membrane usher protein HifC (hifC) (Haemophilus influenzae).